Reading from the N-terminus, the 342-residue chain is Trans-3-hydroxy-L-proline dehydratase (342 aa).

Residue Ser-90 is the Proton acceptor of the active site. Substrate-binding positions include Gly-91 to Ser-92, Asp-251, and Gly-256 to Thr-257.

It belongs to the proline racemase family.

The enzyme catalyses trans-3-hydroxy-L-proline = 1-pyrroline-2-carboxylate + H2O. Functionally, catalyzes the dehydration of trans-3-hydroxy-L-proline (t3LHyp) to Delta(1)-pyrroline-2-carboxylate (Pyr2C). Displays neither proline racemase activity nor 4-hydroxyproline 2-epimerase activity. In Brucella suis biovar 1 (strain 1330), this protein is Trans-3-hydroxy-L-proline dehydratase.